We begin with the raw amino-acid sequence, 506 residues long: MELSDILASFHASNLIPEGIVACTILLVLLLDLVYSRTCHAWLAWVAMAGLSLASVLLGQQWYQLMNLPTATMTFGGSFQADSLSLVFRAIIAMSCVLCILLSIDYVESTGTAPSEFLVLIATASLGGMLVAGSNDLLMMFVSLETLGLASYLLTGYMKRDVRSNEASLKYLLVGAASSGLFLYGISWMYGISGGHMELNSIAHAIVSLDETKTTTCALALVLMTVGVGFKVAAAPFHQWTPDVYQGSPTPVVAFLSVGSKAAGFILAVRMCTTLFPSFNTEWHLIFTILSILSMIVGNFIAVTQTSLKRMLGYSSVGQAGVMMIGMLTDSPDGYASLIVYLLIYLFMNLGAFACVILFGLRTGTDQIQDYSGLLARDPFLALCLSLCLLSLGGIPPLAGFFGKMYLFLAAWDAGQYSLVWVGLITSVVSIYYYLSVVKIMLVPATQEMSLAVREYPRRAWSLEPIQPLEVGIFVCVLGSILVGVAGNSMVNLMTITMSQAPSLGV.

13 helical membrane-spanning segments follow: residues 15-35, 39-59, 84-104, 113-133, 137-157, 172-192, 217-237, 249-269, 283-303, 339-359, 382-402, 418-438, and 471-491; these read LIPE…DLVY, CHAW…VLLG, LSLV…LLSI, APSE…LVAG, LLMM…LTGY, LLVG…MYGI, CALA…AAPF, PTPV…ILAV, WHLI…FIAV, IVYL…VILF, ALCL…AGFF, SLVW…LSVV, and VGIF…NSMV.

This sequence belongs to the complex I subunit 2 family. As to quaternary structure, NDH is composed of at least 16 different subunits, 5 of which are encoded in the nucleus.

It localises to the plastid. Its subcellular location is the chloroplast thylakoid membrane. The enzyme catalyses a plastoquinone + NADH + (n+1) H(+)(in) = a plastoquinol + NAD(+) + n H(+)(out). The catalysed reaction is a plastoquinone + NADPH + (n+1) H(+)(in) = a plastoquinol + NADP(+) + n H(+)(out). Its function is as follows. NDH shuttles electrons from NAD(P)H:plastoquinone, via FMN and iron-sulfur (Fe-S) centers, to quinones in the photosynthetic chain and possibly in a chloroplast respiratory chain. The immediate electron acceptor for the enzyme in this species is believed to be plastoquinone. Couples the redox reaction to proton translocation, and thus conserves the redox energy in a proton gradient. The polypeptide is NAD(P)H-quinone oxidoreductase subunit 2, chloroplastic (Nephroselmis olivacea (Green alga)).